The following is a 243-amino-acid chain: Terpene cyclase dpmaB (243 aa).

6 helical membrane-spanning segments follow: residues 11-31, 51-71, 112-132, 141-161, 169-189, and 207-227; these read PGYL…GLGW, ALMP…IYPF, LPFI…ALAL, AFSA…QLLS, SYFL…QDVL, and IWFV…LWYV.

Belongs to the paxB family.

It is found in the membrane. Its pathway is secondary metabolite biosynthesis; terpenoid biosynthesis. Terpene cyclase; part of the gene cluster that mediates the biosynthesis of the diterpenoid pyrones subglutinols A and B. The first step of the pathway is the synthesis of the alpha-pyrone moiety by the polyketide synthase dpmaA via condensation of one acetyl-CoA starter unit with 3 malonyl-CoA units and 2 methylations. The alpha-pyrone is then combined with geranylgeranyl pyrophosphate (GGPP) formed by the GGPP synthase dpmaD through the action of the prenyltransferase dpmaC to yield a linear alpha-pyrone diterpenoid. Subsequent steps in the diterpenoid pyrone biosynthetic pathway involve the decalin core formation, which is initiated by the epoxidation of the C10-C11 olefin by the FAD-dependent oxidoreductase dpmaE, and is followed by a cyclization cascade catalyzed by the terpene cyclase dpmaB. The dehydrogenase dpmaF is then involved in tetrahydrofuran (THF) ring formation at the C5 unit to complete the formation of subglutinols A and B. The chain is Terpene cyclase dpmaB from Metarhizium anisopliae (Entomophthora anisopliae).